The primary structure comprises 347 residues: NADH-ubiquinone oxidoreductase chain 2 (347 aa).

The next 11 helical transmembrane spans lie at Pro-3 to Ser-23, His-25 to Met-45, Ala-66 to Val-86, Met-96 to Pro-116, Ile-122 to Leu-142, Ile-145 to Gly-165, Ile-178 to Pro-198, Met-200 to Met-220, Met-237 to Leu-257, Asn-274 to Met-294, and Leu-325 to Ile-345.

The protein belongs to the complex I subunit 2 family. As to quaternary structure, core subunit of respiratory chain NADH dehydrogenase (Complex I) which is composed of 45 different subunits. Interacts with TMEM242.

The protein resides in the mitochondrion inner membrane. It carries out the reaction a ubiquinone + NADH + 5 H(+)(in) = a ubiquinol + NAD(+) + 4 H(+)(out). In terms of biological role, core subunit of the mitochondrial membrane respiratory chain NADH dehydrogenase (Complex I) which catalyzes electron transfer from NADH through the respiratory chain, using ubiquinone as an electron acceptor. Essential for the catalytic activity and assembly of complex I. The sequence is that of NADH-ubiquinone oxidoreductase chain 2 from Capra hircus (Goat).